The chain runs to 489 residues: Probable transporter MCH1 (489 aa).

3 consecutive transmembrane segments (helical) span residues 30-50 (IAYIFALFAAITSGFVSLISL), 68-88 (MIVTVINMGMYLTPPILGIIA), and 92-112 (GPITLSLSSVLGFIPSYAYLA). N123 carries an N-linked (GlcNAc...) asparagine glycan. Transmembrane regions (helical) follow at residues 132–152 (TLVCFFIIGVATSGLYFSALI), 163–183 (LLSISIPTTCYGLSSLIGSQF), 202–222 (VFKAFAWIYTVIGVMIWIATS), 279–299 (VLYIFGATIFCALGPLEMFIA), 307–327 (VLAGGHEPAMSSALLSIYALT), 351–371 (WILLLFLVVGLVTQGKIYMLS), 388–408 (FYIGIMQGIAYGGLFTIYPTI), and 421–441 (AYGTLMIAPALGSALSCLIYA). An N-linked (GlcNAc...) asparagine glycan is attached at N450. Residues 462–482 (ETTALEFCAAILLTVVVTVLW) traverse the membrane as a helical segment.

The protein belongs to the major facilitator superfamily.

It is found in the vacuole membrane. Probable transporter. This chain is Probable transporter MCH1 (MCH1), found in Candida glabrata (strain ATCC 2001 / BCRC 20586 / JCM 3761 / NBRC 0622 / NRRL Y-65 / CBS 138) (Yeast).